Consider the following 452-residue polypeptide: Bifunctional protein GlmU (452 aa).

The tract at residues 1 to 232 (MTTRTSLTIV…EDEVRGINTK (232 aa)) is pyrophosphorylase. UDP-N-acetyl-alpha-D-glucosamine is bound by residues 11-14 (LAAG), Lys25, Gln78, and 83-84 (GT). Residue Asp108 participates in Mg(2+) binding. Residues Gly144, Glu158, Asn173, and Asn230 each coordinate UDP-N-acetyl-alpha-D-glucosamine. Asn230 contributes to the Mg(2+) binding site. The interval 233–253 (AQLAEAEAVMQTRLRQAAMTA) is linker. The segment at 254-452 (GVTLISPETI…SARARKPKTS (199 aa)) is N-acetyltransferase. Residues Arg319 and Lys337 each coordinate UDP-N-acetyl-alpha-D-glucosamine. The active-site Proton acceptor is His349. Residues Tyr352 and Asn363 each contribute to the UDP-N-acetyl-alpha-D-glucosamine site. Acetyl-CoA contacts are provided by residues Ala366, 372–373 (NY), Ser391, Ser409, and Arg426.

This sequence in the N-terminal section; belongs to the N-acetylglucosamine-1-phosphate uridyltransferase family. It in the C-terminal section; belongs to the transferase hexapeptide repeat family. As to quaternary structure, homotrimer. The cofactor is Mg(2+).

The protein resides in the cytoplasm. It catalyses the reaction alpha-D-glucosamine 1-phosphate + acetyl-CoA = N-acetyl-alpha-D-glucosamine 1-phosphate + CoA + H(+). The catalysed reaction is N-acetyl-alpha-D-glucosamine 1-phosphate + UTP + H(+) = UDP-N-acetyl-alpha-D-glucosamine + diphosphate. It functions in the pathway nucleotide-sugar biosynthesis; UDP-N-acetyl-alpha-D-glucosamine biosynthesis; N-acetyl-alpha-D-glucosamine 1-phosphate from alpha-D-glucosamine 6-phosphate (route II): step 2/2. Its pathway is nucleotide-sugar biosynthesis; UDP-N-acetyl-alpha-D-glucosamine biosynthesis; UDP-N-acetyl-alpha-D-glucosamine from N-acetyl-alpha-D-glucosamine 1-phosphate: step 1/1. The protein operates within bacterial outer membrane biogenesis; LPS lipid A biosynthesis. Functionally, catalyzes the last two sequential reactions in the de novo biosynthetic pathway for UDP-N-acetylglucosamine (UDP-GlcNAc). The C-terminal domain catalyzes the transfer of acetyl group from acetyl coenzyme A to glucosamine-1-phosphate (GlcN-1-P) to produce N-acetylglucosamine-1-phosphate (GlcNAc-1-P), which is converted into UDP-GlcNAc by the transfer of uridine 5-monophosphate (from uridine 5-triphosphate), a reaction catalyzed by the N-terminal domain. The polypeptide is Bifunctional protein GlmU (Rhodopseudomonas palustris (strain BisB5)).